The chain runs to 200 residues: Protein GrpE (200 aa).

The span at 1–11 (MSNQTNKAQDN) shows a compositional bias: polar residues. The interval 1 to 25 (MSNQTNKAQDNQVEEIVEGELLNEN) is disordered.

Belongs to the GrpE family. Homodimer.

It localises to the cytoplasm. Participates actively in the response to hyperosmotic and heat shock by preventing the aggregation of stress-denatured proteins, in association with DnaK and GrpE. It is the nucleotide exchange factor for DnaK and may function as a thermosensor. Unfolded proteins bind initially to DnaJ; upon interaction with the DnaJ-bound protein, DnaK hydrolyzes its bound ATP, resulting in the formation of a stable complex. GrpE releases ADP from DnaK; ATP binding to DnaK triggers the release of the substrate protein, thus completing the reaction cycle. Several rounds of ATP-dependent interactions between DnaJ, DnaK and GrpE are required for fully efficient folding. In Shewanella pealeana (strain ATCC 700345 / ANG-SQ1), this protein is Protein GrpE.